Consider the following 339-residue polypeptide: Anthranilate phosphoribosyltransferase (339 aa).

Residues glycine 81, 84–85 (GD), 91–94 (NIST), 109–117 (KHGNRAASS), and serine 121 contribute to the 5-phospho-alpha-D-ribose 1-diphosphate site. Glycine 81 is a binding site for anthranilate. Serine 93 is a Mg(2+) binding site. An anthranilate-binding site is contributed by asparagine 112. Arginine 167 lines the anthranilate pocket. Mg(2+)-binding residues include aspartate 226 and glutamate 227.

This sequence belongs to the anthranilate phosphoribosyltransferase family. In terms of assembly, homodimer. Mg(2+) is required as a cofactor.

It catalyses the reaction N-(5-phospho-beta-D-ribosyl)anthranilate + diphosphate = 5-phospho-alpha-D-ribose 1-diphosphate + anthranilate. Its pathway is amino-acid biosynthesis; L-tryptophan biosynthesis; L-tryptophan from chorismate: step 2/5. In terms of biological role, catalyzes the transfer of the phosphoribosyl group of 5-phosphorylribose-1-pyrophosphate (PRPP) to anthranilate to yield N-(5'-phosphoribosyl)-anthranilate (PRA). This chain is Anthranilate phosphoribosyltransferase, found in Maricaulis maris (strain MCS10) (Caulobacter maris).